We begin with the raw amino-acid sequence, 267 residues long: Luciferase (267 aa).

Asn-4 carries N-linked (GlcNAc...) asparagine glycosylation. Residues 17-39 (LSSRSIAITCGVVLASAIAFPII) form a helical membrane-spanning segment.

This sequence belongs to the fungal luciferase family.

The protein localises to the membrane. It catalyses the reaction 3-hydroxyhispidin + O2 = (E)-caffeoylpyruvate + hnu + CO2. The enzyme catalyses 3-hydroxyhispidin + O2 = 4-[(E)-2-(3,4-dihydroxyphenyl)ethenyl]-1,7-dihydroxy-2,3,5-trioxabicyclo[2.2.2]oct-7-en-6-one. Functionally, luciferase; part of the gene cluster that mediates the fungal bioluminescence cycle. Uses the fungal luciferin 3-hydroxyhispidin as a substrate to produce an endoperoxide as a high-energy intermediate with decomposition that yields oxyluciferin (also known as caffeoylpyruvate) and light emission. The fungal bioluminescence cycle begins with the hispidin synthetase that catalyzes the formation of hispidin which is further hydroxylated by the hispidin-3-hydroxylase, yielding the fungal luciferin 3-hydroxyhispidin. The luciferase then produces an endoperoxide as a high-energy intermediate with decomposition that yields oxyluciferin and light emission. Oxyluciferin can be recycled to caffeic acid by caffeoylpyruvate hydrolase. The sequence is that of Luciferase from Neonothopanus nambi (Agaricus nambi).